Here is a 315-residue protein sequence, read N- to C-terminus: Acetyl-coenzyme A carboxylase carboxyl transferase subunit alpha (315 aa).

The CoA carboxyltransferase C-terminal domain occupies 39–293 (RLQDKSSTLT…RGELASQLAM (255 aa)).

It belongs to the AccA family. In terms of assembly, acetyl-CoA carboxylase is a heterohexamer composed of biotin carboxyl carrier protein (AccB), biotin carboxylase (AccC) and two subunits each of ACCase subunit alpha (AccA) and ACCase subunit beta (AccD).

It localises to the cytoplasm. It carries out the reaction N(6)-carboxybiotinyl-L-lysyl-[protein] + acetyl-CoA = N(6)-biotinyl-L-lysyl-[protein] + malonyl-CoA. It participates in lipid metabolism; malonyl-CoA biosynthesis; malonyl-CoA from acetyl-CoA: step 1/1. Component of the acetyl coenzyme A carboxylase (ACC) complex. First, biotin carboxylase catalyzes the carboxylation of biotin on its carrier protein (BCCP) and then the CO(2) group is transferred by the carboxyltransferase to acetyl-CoA to form malonyl-CoA. The sequence is that of Acetyl-coenzyme A carboxylase carboxyl transferase subunit alpha from Pseudomonas fluorescens (strain SBW25).